Here is a 360-residue protein sequence, read N- to C-terminus: 3-dehydroquinate synthase (360 aa).

NAD(+) is bound by residues 69-74, 103-107, 127-128, Lys-140, Lys-149, and 167-170; these read DGEAYK, GVIGD, TT, and CLQT. Positions 182, 245, and 262 each coordinate Zn(2+).

It belongs to the sugar phosphate cyclases superfamily. Dehydroquinate synthase family. Co(2+) serves as cofactor. Requires Zn(2+) as cofactor. The cofactor is NAD(+).

The protein localises to the cytoplasm. The enzyme catalyses 7-phospho-2-dehydro-3-deoxy-D-arabino-heptonate = 3-dehydroquinate + phosphate. The protein operates within metabolic intermediate biosynthesis; chorismate biosynthesis; chorismate from D-erythrose 4-phosphate and phosphoenolpyruvate: step 2/7. In terms of biological role, catalyzes the conversion of 3-deoxy-D-arabino-heptulosonate 7-phosphate (DAHP) to dehydroquinate (DHQ). In Aeromonas hydrophila subsp. hydrophila (strain ATCC 7966 / DSM 30187 / BCRC 13018 / CCUG 14551 / JCM 1027 / KCTC 2358 / NCIMB 9240 / NCTC 8049), this protein is 3-dehydroquinate synthase.